The primary structure comprises 277 residues: Shikimate dehydrogenase (NADP(+)) (277 aa).

Residues 18–20 (SKS) and Thr-65 each bind shikimate. Catalysis depends on Lys-69, which acts as the Proton acceptor. NADP(+) is bound at residue Glu-81. The shikimate site is built by Asn-90 and Asp-106. Residues 130–134 (GAGGA), 154–159 (NRTFSK), and Met-217 contribute to the NADP(+) site. Tyr-219 is a binding site for shikimate. Gly-241 contacts NADP(+).

It belongs to the shikimate dehydrogenase family. As to quaternary structure, homodimer.

The catalysed reaction is shikimate + NADP(+) = 3-dehydroshikimate + NADPH + H(+). It functions in the pathway metabolic intermediate biosynthesis; chorismate biosynthesis; chorismate from D-erythrose 4-phosphate and phosphoenolpyruvate: step 4/7. Its function is as follows. Involved in the biosynthesis of the chorismate, which leads to the biosynthesis of aromatic amino acids. Catalyzes the reversible NADPH linked reduction of 3-dehydroshikimate (DHSA) to yield shikimate (SA). This Vibrio campbellii (strain ATCC BAA-1116) protein is Shikimate dehydrogenase (NADP(+)).